A 612-amino-acid chain; its full sequence is Dihydroxy-acid dehydratase (612 aa).

Aspartate 81 lines the Mg(2+) pocket. [2Fe-2S] cluster is bound at residue cysteine 122. The Mg(2+) site is built by aspartate 123 and lysine 124. Lysine 124 is subject to N6-carboxylysine. Cysteine 195 lines the [2Fe-2S] cluster pocket. Position 491 (glutamate 491) interacts with Mg(2+). The Proton acceptor role is filled by serine 517.

This sequence belongs to the IlvD/Edd family. As to quaternary structure, homodimer. Requires [2Fe-2S] cluster as cofactor. Mg(2+) serves as cofactor.

It catalyses the reaction (2R)-2,3-dihydroxy-3-methylbutanoate = 3-methyl-2-oxobutanoate + H2O. The enzyme catalyses (2R,3R)-2,3-dihydroxy-3-methylpentanoate = (S)-3-methyl-2-oxopentanoate + H2O. Its pathway is amino-acid biosynthesis; L-isoleucine biosynthesis; L-isoleucine from 2-oxobutanoate: step 3/4. The protein operates within amino-acid biosynthesis; L-valine biosynthesis; L-valine from pyruvate: step 3/4. In terms of biological role, functions in the biosynthesis of branched-chain amino acids. Catalyzes the dehydration of (2R,3R)-2,3-dihydroxy-3-methylpentanoate (2,3-dihydroxy-3-methylvalerate) into 2-oxo-3-methylpentanoate (2-oxo-3-methylvalerate) and of (2R)-2,3-dihydroxy-3-methylbutanoate (2,3-dihydroxyisovalerate) into 2-oxo-3-methylbutanoate (2-oxoisovalerate), the penultimate precursor to L-isoleucine and L-valine, respectively. The sequence is that of Dihydroxy-acid dehydratase from Haemophilus influenzae (strain PittEE).